The sequence spans 520 residues: GMP synthase [glutamine-hydrolyzing] (520 aa).

The Glutamine amidotransferase type-1 domain occupies 8 to 202 (RLLIIDFGSQ…FVRLAGFSGD (195 aa)). The active-site Nucleophile is the cysteine 86. Active-site residues include histidine 177 and glutamate 179. The GMPS ATP-PPase domain maps to 203-395 (WTMGAYREQM…LGLPDSFIGR (193 aa)). 230 to 236 (SGGVDSS) is an ATP binding site.

As to quaternary structure, homodimer.

The catalysed reaction is XMP + L-glutamine + ATP + H2O = GMP + L-glutamate + AMP + diphosphate + 2 H(+). It participates in purine metabolism; GMP biosynthesis; GMP from XMP (L-Gln route): step 1/1. In terms of biological role, catalyzes the synthesis of GMP from XMP. This is GMP synthase [glutamine-hydrolyzing] from Ruegeria sp. (strain TM1040) (Silicibacter sp.).